The primary structure comprises 517 residues: BTB/POZ domain-containing protein At3g49900 (517 aa).

Low complexity predominate over residues 28–37 (SSSSSSLSLS). The interval 28-49 (SSSSSSLSLSPKQPINLSSSPS) is disordered. The span at 38-49 (PKQPINLSSSPS) shows a compositional bias: polar residues. In terms of domain architecture, BTB spans 67-130 (PDVFVNVGGT…CYGAHIELTP (64 aa)). One can recognise an NPH3 domain in the interval 224–307 (LPAGDFNVVA…VRAMLQEQLN (84 aa)). Residues 409–456 (ARSASFHCVHQPSNVNKTQRGDRGSVSNLSTTYRRRRASPPQAQPQKS) form a disordered region.

It belongs to the NPH3 family.

It participates in protein modification; protein ubiquitination. Its function is as follows. May act as a substrate-specific adapter of an E3 ubiquitin-protein ligase complex (CUL3-RBX1-BTB) which mediates the ubiquitination and subsequent proteasomal degradation of target proteins. The chain is BTB/POZ domain-containing protein At3g49900 from Arabidopsis thaliana (Mouse-ear cress).